The sequence spans 95 residues: Putative monooxygenase YcnE (95 aa).

The region spanning 2 to 93 is the ABM domain; that stretch reads IVLQAYIKVK…APLDVVRTEL (92 aa). Phosphoserine is present on S24.

Belongs to the LsrG family.

Its function is as follows. Putative monooxygenase that may contribute to the degradation of aromatic compounds. This Bacillus subtilis (strain 168) protein is Putative monooxygenase YcnE (ycnE).